The chain runs to 93 residues: Defensin-like protein 229 (93 aa).

An N-terminal signal peptide occupies residues 1 to 19 (MKSTTLFMVSCVLIFCVLS). 4 cysteine pairs are disulfide-bonded: Cys-38/Cys-93, Cys-48/Cys-72, Cys-56/Cys-84, and Cys-70/Cys-86.

Belongs to the DEFL family. As to expression, flower buds.

The protein resides in the secreted. The sequence is that of Defensin-like protein 229 (SCRL27) from Arabidopsis thaliana (Mouse-ear cress).